The sequence spans 381 residues: Pyrimidine monooxygenase RutA (381 aa).

FMN contacts are provided by residues 66–67 (IK), Asn132, Glu141, 157–158 (RY), and Ser207.

The protein belongs to the NtaA/SnaA/DszA monooxygenase family. RutA subfamily.

It catalyses the reaction uracil + FMNH2 + NADH + O2 = (Z)-3-ureidoacrylate + FMN + NAD(+) + H2O + H(+). It carries out the reaction thymine + FMNH2 + NADH + O2 = (Z)-2-methylureidoacrylate + FMN + NAD(+) + H2O + H(+). Catalyzes the pyrimidine ring opening between N-3 and C-4 by an unusual flavin hydroperoxide-catalyzed mechanism, adding oxygen atoms in the process to yield ureidoacrylate peracid, that immediately reacts with FMN forming ureidoacrylate and FMN-N(5)-oxide. The FMN-N(5)-oxide reacts spontaneously with NADH to produce FMN. Requires the flavin reductase RutF to regenerate FMN in vivo. This is Pyrimidine monooxygenase RutA from Methylobacterium radiotolerans (strain ATCC 27329 / DSM 1819 / JCM 2831 / NBRC 15690 / NCIMB 10815 / 0-1).